The primary structure comprises 505 residues: Forkhead box protein O4 (505 aa).

The span at 1–10 shows a compositional bias: polar residues; sequence MDPGNENSAT. Disordered regions lie at residues 1–100 and 176–246; these read MDPG…RRNA and SWWM…CSRN. Thr-32 is modified (phosphothreonine; by PKB/AKT1). Basic and acidic residues predominate over residues 54–64; that stretch reads LGEKVHTEGRS. The segment at residues 100 to 188 is a DNA-binding region (fork-head); sequence AWGNQSYAEL…MLNPEGGKSG (89 aa). Ser-197 is modified (phosphoserine; by PKB/AKT1). Basic residues predominate over residues 205 to 216; sequence LRGRSKAPKKKP. Ser-262 carries the post-translational modification Phosphoserine; by PKB/AKT1.

In terms of assembly, interacts with CREBBP/CBP, CTNNB1, MYOCD, SIRT1, SRF and YWHAZ. Acetylated by CREBBP/CBP and deacetylated by SIRT1. Binding of YWHAZ inhibits DNA-binding. Interacts with USP7; the interaction is enhanced in presence of hydrogen peroxide and occurs independently of TP53. Interacts with NLK, and this inhibits monoubiquitination and transcriptional activity. Interacts with FOXK1; the interaction inhibits MEF2C transactivation activity. Acetylation by CREBBP/CBP, which is induced by peroxidase stress, inhibits transcriptional activity. Deacetylation by SIRT1 is NAD-dependent and stimulates transcriptional activity. In terms of processing, phosphorylation by PKB/AKT1 inhibits transcriptional activity and is responsible for cytoplasmic localization. May be phosphorylated at multiple sites by NLK. Post-translationally, monoubiquitinated; monoubiquitination is induced by oxidative stress and reduced by deacetylase inhibitors; results in its relocalization to the nucleus and its increased transcriptional activity. Deubiquitinated by USP7; deubiquitination is induced by oxidative stress; enhances its interaction with USP7 and consequently, deubiquitination; increases its translocation to the cytoplasm and inhibits its transcriptional activity. Hydrogene-peroxide-induced ubiquitination and USP7-mediated deubiquitination have no major effect on its protein stability. As to expression, heart, brain, placenta, lung, liver, skeletal muscle, kidney and pancreas. Isoform zeta is most abundant in the liver, kidney, and pancreas.

It is found in the cytoplasm. The protein resides in the nucleus. Its function is as follows. Transcription factor involved in the regulation of the insulin signaling pathway. Binds to insulin-response elements (IREs) and can activate transcription of IGFBP1. Down-regulates expression of HIF1A and suppresses hypoxia-induced transcriptional activation of HIF1A-modulated genes. Also involved in negative regulation of the cell cycle. Involved in increased proteasome activity in embryonic stem cells (ESCs) by activating expression of PSMD11 in ESCs, leading to enhanced assembly of the 26S proteasome, followed by higher proteasome activity. This chain is Forkhead box protein O4 (FOXO4), found in Homo sapiens (Human).